A 101-amino-acid polypeptide reads, in one-letter code: NAD(P)H-quinone oxidoreductase subunit 4L, chloroplastic (101 aa).

A run of 3 helical transmembrane segments spans residues Met2–Ile22, Met32–Phe52, and Ile61–Val81.

The protein belongs to the complex I subunit 4L family. As to quaternary structure, NDH is composed of at least 16 different subunits, 5 of which are encoded in the nucleus.

It is found in the plastid. The protein localises to the chloroplast thylakoid membrane. The catalysed reaction is a plastoquinone + NADH + (n+1) H(+)(in) = a plastoquinol + NAD(+) + n H(+)(out). The enzyme catalyses a plastoquinone + NADPH + (n+1) H(+)(in) = a plastoquinol + NADP(+) + n H(+)(out). NDH shuttles electrons from NAD(P)H:plastoquinone, via FMN and iron-sulfur (Fe-S) centers, to quinones in the photosynthetic chain and possibly in a chloroplast respiratory chain. The immediate electron acceptor for the enzyme in this species is believed to be plastoquinone. Couples the redox reaction to proton translocation, and thus conserves the redox energy in a proton gradient. The polypeptide is NAD(P)H-quinone oxidoreductase subunit 4L, chloroplastic (Jasminum nudiflorum (Winter jasmine)).